Reading from the N-terminus, the 97-residue chain is UPF0235 protein Ppha_2415 (97 aa).

It belongs to the UPF0235 family.

The chain is UPF0235 protein Ppha_2415 from Pelodictyon phaeoclathratiforme (strain DSM 5477 / BU-1).